We begin with the raw amino-acid sequence, 546 residues long: Crossover junction endonuclease EME1A (546 aa).

2 disordered regions span residues 1-55 (MSDF…FLDE) and 88-232 (VISL…REKQ). Residues 28–49 (PTDLNLDTEPSLQKQPPGSAST) are compositionally biased toward polar residues. 2 stretches are compositionally biased toward basic and acidic residues: residues 103-120 (SSKK…KPCR) and 149-167 (DAIE…VEKM). The span at 173-183 (TITSKSTSLSA) shows a compositional bias: polar residues. A coiled-coil region spans residues 188–245 (KKKMSKDEKTRAAEEKKLQKEQEKLQKAASKAEDAEHKKLEREKQKWAKEKDKALKCI). Basic and acidic residues predominate over residues 192-232 (SKDEKTRAAEEKKLQKEQEKLQKAASKAEDAEHKKLEREKQ). The ERCC4 domain occupies 278 to 478 (NPIQRSIVWT…PSLKSLLKVY (201 aa)).

Belongs to the EME1/MMS4 family. In terms of assembly, forms a heterodimer with MUS81. The cofactor is Mg(2+). Ca(2+) serves as cofactor.

It is found in the nucleus. Its function is as follows. Interacts with MUS81 to form a DNA structure-specific endonuclease with substrate preference for branched DNA structures with a 5'-end at the branch nick. Typical substrates include 3'-flap structures, D-loops, replication forks, nicked Holliday junctions and also intact Holliday junctions with a reduced efficiency. May be required in mitosis for the processing of stalled or collapsed replication fork intermediates. Plays a role in DNA repair and in genotoxic stress-induced homologous recombination (HR) in somatic cells. Mediates a subset of meiotic recombination events that are insensitive to crossover interference. The sequence is that of Crossover junction endonuclease EME1A (EME1A) from Arabidopsis thaliana (Mouse-ear cress).